Here is a 174-residue protein sequence, read N- to C-terminus: ATP synthase subunit b 2 (174 aa).

Residues 27–47 form a helical membrane-spanning segment; the sequence is IFWLIITLVAIYLILTKVALP.

The protein belongs to the ATPase B chain family. F-type ATPases have 2 components, F(1) - the catalytic core - and F(0) - the membrane proton channel. F(1) has five subunits: alpha(3), beta(3), gamma(1), delta(1), epsilon(1). F(0) has three main subunits: a(1), b(2) and c(10-14). The alpha and beta chains form an alternating ring which encloses part of the gamma chain. F(1) is attached to F(0) by a central stalk formed by the gamma and epsilon chains, while a peripheral stalk is formed by the delta and b chains.

It localises to the cell inner membrane. In terms of biological role, f(1)F(0) ATP synthase produces ATP from ADP in the presence of a proton or sodium gradient. F-type ATPases consist of two structural domains, F(1) containing the extramembraneous catalytic core and F(0) containing the membrane proton channel, linked together by a central stalk and a peripheral stalk. During catalysis, ATP synthesis in the catalytic domain of F(1) is coupled via a rotary mechanism of the central stalk subunits to proton translocation. Functionally, component of the F(0) channel, it forms part of the peripheral stalk, linking F(1) to F(0). The b'-subunit is a diverged and duplicated form of b found in plants and photosynthetic bacteria. The sequence is that of ATP synthase subunit b 2 (atpF2) from Dinoroseobacter shibae (strain DSM 16493 / NCIMB 14021 / DFL 12).